The primary structure comprises 334 residues: Phenazine-1-carboxylate N-methyltransferase (334 aa).

2 residues coordinate S-adenosyl-L-methionine: D198 and R241.

Belongs to the class I-like SAM-binding methyltransferase superfamily. Cation-independent O-methyltransferase family. As to quaternary structure, homodimer in solution. Probably interacts transiently with PhzS.

The enzyme catalyses phenazine-1-carboxylate + S-adenosyl-L-methionine = 5-methyl-phenazine-1-carboxylate + S-adenosyl-L-homocysteine. Its pathway is secondary metabolite biosynthesis; pyocyanine biosynthesis. Its activity is regulated as follows. In vitro, requires PhzS for activity. Functionally, involved in the biosynthesis of pyocyanine, a blue-pigmented phenazine derivative, which plays a role in virulence. Converts phenazine-1-carboxylate (PCA) to 5-methylphenazine-1-carboxylate (5-methyl-PCA). The chain is Phenazine-1-carboxylate N-methyltransferase from Pseudomonas aeruginosa (strain ATCC 15692 / DSM 22644 / CIP 104116 / JCM 14847 / LMG 12228 / 1C / PRS 101 / PAO1).